The chain runs to 520 residues: GMP synthase [glutamine-hydrolyzing] (520 aa).

The region spanning 13–205 (KIIVLDYGSQ…ALNICKAKGD (193 aa)) is the Glutamine amidotransferase type-1 domain. Residue cysteine 90 is the Nucleophile of the active site. Residues histidine 179 and glutamate 181 contribute to the active site. The GMPS ATP-PPase domain occupies 206-395 (WSMDNFIDMQ…LGMPDHIVWR (190 aa)). Position 233 to 239 (233 to 239 (SGGVDSS)) interacts with ATP.

Homodimer.

The enzyme catalyses XMP + L-glutamine + ATP + H2O = GMP + L-glutamate + AMP + diphosphate + 2 H(+). It functions in the pathway purine metabolism; GMP biosynthesis; GMP from XMP (L-Gln route): step 1/1. Its function is as follows. Catalyzes the synthesis of GMP from XMP. This chain is GMP synthase [glutamine-hydrolyzing], found in Streptococcus pneumoniae (strain ATCC 700669 / Spain 23F-1).